Consider the following 274-residue polypeptide: Thiamine kinase (274 aa).

The protein belongs to the thiamine kinase family.

The enzyme catalyses thiamine + ATP = thiamine phosphate + ADP + H(+). The protein operates within cofactor biosynthesis; thiamine diphosphate biosynthesis; thiamine phosphate from thiamine: step 1/1. Functionally, catalyzes the ATP-dependent phosphorylation of thiamine to thiamine phosphate. Is involved in thiamine salvage. The chain is Thiamine kinase from Escherichia coli O157:H7.